Here is a 526-residue protein sequence, read N- to C-terminus: Cytochrome P450 monooxygenase SAT11 (526 aa).

Residues 18 to 38 (AFLLIAMLYLGYLLCICFYNI) traverse the membrane as a helical segment. Residues Asn125 and Asn447 are each glycosylated (N-linked (GlcNAc...) asparagine). Cys455 provides a ligand contact to heme. The N-linked (GlcNAc...) asparagine glycan is linked to Asn520.

It belongs to the cytochrome P450 family. Heme is required as a cofactor.

It is found in the membrane. The protein operates within mycotoxin biosynthesis. Functionally, cytochrome P450 monooxygenase; part of the satratoxin SC2 cluster involved in the biosynthesis of satratoxins, trichothecene mycotoxins that are associated with human food poisonings. Satratoxins are suggested to be made by products of multiple gene clusters (SC1, SC2 and SC3) that encode 21 proteins in all, including polyketide synthases, acetyltransferases, and other enzymes expected to modify the trichothecene skeleton. SC1 encodes 10 proteins, SAT1 to SAT10. The largest are SAT8, which encodes a putative polyketide synthase (PKS) with a conventional non-reducing architecture, and SAT10, a putative protein containing four ankyrin repeats and thus may be involved in protein scaffolding. The putative short-chain reductase SAT3 may assist the PKS in some capacity. SAT6 contains a secretory lipase domain and acts probably as a trichothecene esterase. SAT5 encodes a putative acetyltransferase, and so, with SAT6, may affect endogenous protection from toxicity. The probable transcription factor SAT9 may regulate the expression of the SC1 cluster. SC2 encodes proteins SAT11 to SAT16, the largest of which encodes the putative reducing PKS SAT13. SAT11 is a cytochrome P450 monooxygenase, while SAT14 and SAT16 are probable acetyltransferases. The SC2 cluster may be regulated by the transcription factor SAT15. SC3 is a small cluster that encodes 5 proteins, SAT17 to SAT21. SAT21 is a putative MFS-type transporter which may have a role in exporting secondary metabolites. The four other proteins putatively encoded in SC3 include the taurine hydroxylase-like protein SAT17, the O-methyltransferase SAT18, the acetyltransferase SAT19, and the Cys6-type zinc finger SAT20, the latter being probably involved in regulation of SC3 expression. This chain is Cytochrome P450 monooxygenase SAT11, found in Stachybotrys chartarum (strain CBS 109288 / IBT 7711) (Toxic black mold).